Reading from the N-terminus, the 436-residue chain is Enolase (436 aa).

Position 167 (Q167) interacts with (2R)-2-phosphoglycerate. The Proton donor role is filled by E209. Positions 246, 291, and 318 each coordinate Mg(2+). 4 residues coordinate (2R)-2-phosphoglycerate: K343, R372, S373, and K394. The active-site Proton acceptor is the K343.

The protein belongs to the enolase family. As to quaternary structure, component of the RNA degradosome, a multiprotein complex involved in RNA processing and mRNA degradation. Mg(2+) serves as cofactor.

The protein resides in the cytoplasm. It is found in the secreted. The protein localises to the cell surface. The enzyme catalyses (2R)-2-phosphoglycerate = phosphoenolpyruvate + H2O. It functions in the pathway carbohydrate degradation; glycolysis; pyruvate from D-glyceraldehyde 3-phosphate: step 4/5. Catalyzes the reversible conversion of 2-phosphoglycerate (2-PG) into phosphoenolpyruvate (PEP). It is essential for the degradation of carbohydrates via glycolysis. This is Enolase from Haemophilus influenzae (strain ATCC 51907 / DSM 11121 / KW20 / Rd).